A 435-amino-acid polypeptide reads, in one-letter code: GTPase Obg (435 aa).

The Obg domain maps to 1-159; the sequence is MAFIDKCKIV…VEVLLELKTI (159 aa). Residues 160–329 form the OBG-type G domain; sequence ADIGIIGLPN…MLDDVIKIYF (170 aa). GTP is bound by residues 166 to 173, 191 to 195, 212 to 215, 282 to 285, and 310 to 312; these read GLPNAGKS, FTTLN, DIPG, NKID, and SAL. Serine 173 and threonine 193 together coordinate Mg(2+). Residues 357-435 form the OCT domain; it reads KSKELDKTIE…IYDITLEFEE (79 aa).

It belongs to the TRAFAC class OBG-HflX-like GTPase superfamily. OBG GTPase family. In terms of assembly, monomer. Mg(2+) serves as cofactor.

The protein localises to the cytoplasm. Its function is as follows. An essential GTPase which binds GTP, GDP and possibly (p)ppGpp with moderate affinity, with high nucleotide exchange rates and a fairly low GTP hydrolysis rate. Plays a role in control of the cell cycle, stress response, ribosome biogenesis and in those bacteria that undergo differentiation, in morphogenesis control. In Ureaplasma parvum serovar 3 (strain ATCC 27815 / 27 / NCTC 11736), this protein is GTPase Obg.